The primary structure comprises 803 residues: Phenylalanine--tRNA ligase beta subunit (803 aa).

The tRNA-binding domain maps to 40–150 (SNKFYGIVIA…IDAPIGCNFY (111 aa)). In terms of domain architecture, B5 spans 405-480 (PKIKIIKLHR…RIYGYNHIPK (76 aa)). The Mg(2+) site is built by D458 and E468. One can recognise an FDX-ACB domain in the interval 710–803 (SKFPKNYRDI…LKKHFNAIFR (94 aa)).

This sequence belongs to the phenylalanyl-tRNA synthetase beta subunit family. Type 1 subfamily. As to quaternary structure, tetramer of two alpha and two beta subunits. Requires Mg(2+) as cofactor.

It localises to the cytoplasm. The enzyme catalyses tRNA(Phe) + L-phenylalanine + ATP = L-phenylalanyl-tRNA(Phe) + AMP + diphosphate + H(+). This is Phenylalanine--tRNA ligase beta subunit from Blochmanniella floridana.